We begin with the raw amino-acid sequence, 270 residues long: Chromo domain-containing protein cec-4 (270 aa).

Disordered regions lie at residues 1–24 (MAKKTVEGEHGTPKTNFTKKETSK) and 143–229 (KIAQ…KNDV). The Chromo domain occupies 87 to 147 (YAVERVLAHR…HQEDLKIAQT (61 aa)). Composition is skewed to basic residues over residues 151 to 167 (TPSKTPKKTPKSLKRRA) and 187 to 197 (TPKQSTKKLKR). Basic and acidic residues predominate over residues 205–229 (LVEKSKKKAIPDLENHTLDQEKNDV).

As to quaternary structure, interacts with mono-, di- and tri-methylated 'Lys-9' residues on histone H3. Weakly interacts with methylated 'Lys-37' residues on histone H3.

The protein localises to the nucleus inner membrane. It is found in the membrane. Functionally, chromatin anchor protein which binds to methylated lysine residues on histone H3, thereby recruiting heterochromatin to the nuclear periphery, especially in embryonic cells, with a lesser role in differentiated cells. May be required for the correct positioning of chromatin and nucleoli in embryos. This is Chromo domain-containing protein cec-4 from Caenorhabditis elegans.